Here is an 84-residue protein sequence, read N- to C-terminus: Small ribosomal subunit protein bS20 (84 aa).

Belongs to the bacterial ribosomal protein bS20 family.

Its function is as follows. Binds directly to 16S ribosomal RNA. This Azobacteroides pseudotrichonymphae genomovar. CFP2 protein is Small ribosomal subunit protein bS20.